The primary structure comprises 476 residues: Dihydrolipoyl dehydrogenase (476 aa).

Residues 36 to 45 (EHQERLGGVC), lysine 54, and alanine 117 each bind FAD. Cysteines 45 and 50 form a disulfide. NAD(+) is bound by residues 182-186 (GGGII), aspartate 205, valine 238, and 271-274 (AIGR). Positions 314 and 322 each coordinate FAD. Residue histidine 446 is the Proton acceptor of the active site.

It belongs to the class-I pyridine nucleotide-disulfide oxidoreductase family. Homodimer. The cofactor is FAD.

It localises to the cytoplasm. The catalysed reaction is N(6)-[(R)-dihydrolipoyl]-L-lysyl-[protein] + NAD(+) = N(6)-[(R)-lipoyl]-L-lysyl-[protein] + NADH + H(+). Its function is as follows. Lipoamide dehydrogenase is a component of the alpha-ketoacid dehydrogenase complexes. This chain is Dihydrolipoyl dehydrogenase (lpdA), found in Buchnera aphidicola subsp. Schizaphis graminum (strain Sg).